The following is a 356-amino-acid chain: MLKVPLSDVLSQKMLFLKSFRYFHCTKYFSRDNASSTTDIFRNAMKRKRELANLKEQSHGNVARNAAFPKEYIKRPKQVPRNATNRKKILITWSTGTDRAKEAANSVVSEIFKKNHKGNIKVVDPTTHRIEASNIRYFAKGIDLDKVGLSIVNVEQIDNENQIPLVKIVESRVALKKYSDFLAKKKEKELMELGVLNKSYKNLVTDKKEDNLKHIKISWQIESDDLKRQKAHEIVSLLKKGNKVTLYLDDKNNINSNNWLENFEELDRSQKGEPPRLPESVFQKRAAVLETLKEIVSEYANDPVLLGNMNSKMIMKLIPKDVKPQNNDKRALKELRKKERQEKLQKRIQRKKMNEM.

The N-terminal 32 residues, 1–32 (MLKVPLSDVLSQKMLFLKSFRYFHCTKYFSRD), are a transit peptide targeting the mitochondrion.

The protein belongs to the AIM23 family.

The protein resides in the mitochondrion. The chain is Altered inheritance of mitochondria protein 23, mitochondrial (AIM23) from Saccharomyces cerevisiae (strain ATCC 204508 / S288c) (Baker's yeast).